The chain runs to 155 residues: Aspartate carbamoyltransferase regulatory chain (155 aa).

4 residues coordinate Zn(2+): C109, C114, C138, and C141.

This sequence belongs to the PyrI family. In terms of assembly, contains catalytic and regulatory chains. It depends on Zn(2+) as a cofactor.

In terms of biological role, involved in allosteric regulation of aspartate carbamoyltransferase. The protein is Aspartate carbamoyltransferase regulatory chain of Vibrio cholerae serotype O1 (strain ATCC 39315 / El Tor Inaba N16961).